Reading from the N-terminus, the 263-residue chain is Phosphatidylglycerol--prolipoprotein diacylglyceryl transferase (263 aa).

A run of 4 helical transmembrane segments spans residues 15–35 (ISIH…VYLA), 52–72 (FILL…VIFQ), 83–103 (IFAI…GAAV), and 112–132 (AIAV…AQSI). Residue R134 participates in a 1,2-diacyl-sn-glycero-3-phospho-(1'-sn-glycerol) binding. Transmembrane regions (helical) follow at residues 170–190 (VPTF…ILGL), 200–220 (GDVT…IEGM), and 227–247 (FVGL…GAVL).

This sequence belongs to the Lgt family.

The protein localises to the cell membrane. It carries out the reaction L-cysteinyl-[prolipoprotein] + a 1,2-diacyl-sn-glycero-3-phospho-(1'-sn-glycerol) = an S-1,2-diacyl-sn-glyceryl-L-cysteinyl-[prolipoprotein] + sn-glycerol 1-phosphate + H(+). Its pathway is protein modification; lipoprotein biosynthesis (diacylglyceryl transfer). Functionally, catalyzes the transfer of the diacylglyceryl group from phosphatidylglycerol to the sulfhydryl group of the N-terminal cysteine of a prolipoprotein, the first step in the formation of mature lipoproteins. This is Phosphatidylglycerol--prolipoprotein diacylglyceryl transferase from Streptococcus thermophilus (strain ATCC BAA-491 / LMD-9).